Reading from the N-terminus, the 208-residue chain is Protein-L-isoaspartate O-methyltransferase (208 aa).

The active site involves Ser-59.

The protein belongs to the methyltransferase superfamily. L-isoaspartyl/D-aspartyl protein methyltransferase family.

The protein localises to the cytoplasm. It carries out the reaction [protein]-L-isoaspartate + S-adenosyl-L-methionine = [protein]-L-isoaspartate alpha-methyl ester + S-adenosyl-L-homocysteine. In terms of biological role, catalyzes the methyl esterification of L-isoaspartyl residues in peptides and proteins that result from spontaneous decomposition of normal L-aspartyl and L-asparaginyl residues. It plays a role in the repair and/or degradation of damaged proteins. The chain is Protein-L-isoaspartate O-methyltransferase from Escherichia coli O1:K1 / APEC.